The sequence spans 169 residues: uncharacterized protein (169 aa).

Positions 4–160 (IEVKRLLVNY…EGVKEQLSED (157 aa)) constitute an N-acetyltransferase domain.

This is an uncharacterized protein from Halalkalibacterium halodurans (strain ATCC BAA-125 / DSM 18197 / FERM 7344 / JCM 9153 / C-125) (Bacillus halodurans).